The chain runs to 493 residues: Glutamyl-tRNA(Gln) amidotransferase subunit A (493 aa).

Active-site charge relay system residues include Lys-79 and Ser-159. Ser-183 (acyl-ester intermediate) is an active-site residue.

This sequence belongs to the amidase family. GatA subfamily. In terms of assembly, heterotrimer of A, B and C subunits.

The enzyme catalyses L-glutamyl-tRNA(Gln) + L-glutamine + ATP + H2O = L-glutaminyl-tRNA(Gln) + L-glutamate + ADP + phosphate + H(+). In terms of biological role, allows the formation of correctly charged Gln-tRNA(Gln) through the transamidation of misacylated Glu-tRNA(Gln) in organisms which lack glutaminyl-tRNA synthetase. The reaction takes place in the presence of glutamine and ATP through an activated gamma-phospho-Glu-tRNA(Gln). This Chelativorans sp. (strain BNC1) protein is Glutamyl-tRNA(Gln) amidotransferase subunit A.